The sequence spans 90 residues: Probable Fe(2+)-trafficking protein (90 aa).

The protein belongs to the Fe(2+)-trafficking protein family. Monomer.

Functionally, could be a mediator in iron transactions between iron acquisition and iron-requiring processes, such as synthesis and/or repair of Fe-S clusters in biosynthetic enzymes. This is Probable Fe(2+)-trafficking protein from Pectobacterium atrosepticum (strain SCRI 1043 / ATCC BAA-672) (Erwinia carotovora subsp. atroseptica).